The primary structure comprises 132 residues: Ribosome-binding factor A (132 aa).

It belongs to the RbfA family. As to quaternary structure, monomer. Binds 30S ribosomal subunits, but not 50S ribosomal subunits or 70S ribosomes.

It is found in the cytoplasm. Functionally, one of several proteins that assist in the late maturation steps of the functional core of the 30S ribosomal subunit. Associates with free 30S ribosomal subunits (but not with 30S subunits that are part of 70S ribosomes or polysomes). Required for efficient processing of 16S rRNA. May interact with the 5'-terminal helix region of 16S rRNA. This is Ribosome-binding factor A from Burkholderia lata (strain ATCC 17760 / DSM 23089 / LMG 22485 / NCIMB 9086 / R18194 / 383).